The following is a 601-amino-acid chain: Probable serine/threonine-protein kinase WNK3 (601 aa).

The 258-residue stretch at 34–291 folds into the Protein kinase domain; that stretch reads GRFNEILGKG…ARELLDDPFL (258 aa). ATP-binding positions include 114 to 117 and lysine 164; that span reads TELF. The active-site Proton acceptor is the aspartate 181. Disordered regions lie at residues 470-498 and 551-601; these read GWRPGPATDDDDDDDLVGGGDDPDAPGGA and ADDD…SEQP. Acidic residues predominate over residues 477–493; that stretch reads TDDDDDDDLVGGGDDPD. The segment covering 560–571 has biased composition (polar residues); it reads LQGSSSDTGGSN. The span at 572–583 shows a compositional bias: basic and acidic residues; it reads HEQHAMGKDKEV.

It belongs to the protein kinase superfamily. Ser/Thr protein kinase family. WNK subfamily.

It catalyses the reaction L-seryl-[protein] + ATP = O-phospho-L-seryl-[protein] + ADP + H(+). The catalysed reaction is L-threonyl-[protein] + ATP = O-phospho-L-threonyl-[protein] + ADP + H(+). The protein is Probable serine/threonine-protein kinase WNK3 (WNK3) of Oryza sativa subsp. japonica (Rice).